The following is a 172-amino-acid chain: uncharacterized protein (172 aa).

Belongs to the baculoviridae 19 kDa protein family.

This is an uncharacterized protein from Orgyia pseudotsugata multicapsid polyhedrosis virus (OpMNPV).